We begin with the raw amino-acid sequence, 431 residues long: Serine/threonine-protein kinase PknA (431 aa).

The Cytoplasmic portion of the chain corresponds to 1-339 (MSPRVGVTLS…RRTFSSGQRA (339 aa)). A Protein kinase domain is found at 13–272 (YRLQRLIATG…SGGPFADAVA (260 aa)). ATP contacts are provided by residues 19–27 (IATGGMGQV) and Lys-42. Asp-141 acts as the Proton acceptor in catalysis. Positions 276 to 333 (AGRRPPRPSQTPPPGRAAPAAIPSGTTARVAANSAGRTAASRRSRPATGGHRPPRRTF) are disordered. A compositionally biased stretch (pro residues) spans 282 to 291 (RPSQTPPPGR). Residues 292–314 (AAPAAIPSGTTARVAANSAGRTA) show a composition bias toward low complexity. The helical transmembrane segment at 340–360 (LLWAAGVLGALAIIIAVLLVI) threads the bilayer. Residues 361-431 (KAPGDNSPQQ…ASLARYEIAQ (71 aa)) are Extracellular-facing. A disordered region spans residues 366-418 (NSPQQAPTPTVTTTGNPPASNTGGTDASPRLNWTERGETRHSGLQSWVVPPTP). Positions 368-384 (PQQAPTPTVTTTGNPPA) are enriched in low complexity.

Belongs to the protein kinase superfamily. Ser/Thr protein kinase family. In terms of processing, autophosphorylated.

It localises to the cell membrane. It catalyses the reaction L-seryl-[protein] + ATP = O-phospho-L-seryl-[protein] + ADP + H(+). It carries out the reaction L-threonyl-[protein] + ATP = O-phospho-L-threonyl-[protein] + ADP + H(+). Functionally, protein kinase that regulates many aspects of mycobacterial physiology. Is a key component of a signal transduction pathway that regulates cell growth, cell shape and cell division via phosphorylation of target proteins. The protein is Serine/threonine-protein kinase PknA (pknA) of Mycobacterium bovis (strain ATCC BAA-935 / AF2122/97).